A 97-amino-acid polypeptide reads, in one-letter code: Large ribosomal subunit protein eL21 (97 aa).

Belongs to the eukaryotic ribosomal protein eL21 family.

The sequence is that of Large ribosomal subunit protein eL21 from Methanococcus vannielii (strain ATCC 35089 / DSM 1224 / JCM 13029 / OCM 148 / SB).